The primary structure comprises 632 residues: ATP-dependent RNA helicase mrh4, mitochondrial (632 aa).

The N-terminal 37 residues, 1–37, are a transit peptide targeting the mitochondrion; sequence MNRLGRMSLPLRSPACLICQTRTTTLIPSSWQTARSM. Positions 49-111 are disordered; sequence MALSPDVAKP…KEEAQKKESP (63 aa). Basic and acidic residues predominate over residues 97–111; it reads RSGDSKEEAQKKESP. Residues 141–174 carry the Q motif motif; it reads TSFDQFPLLPVVRNSIVSQALPGLMEVTPTPIQR. A Helicase ATP-binding domain is found at 194 to 406; sequence DDDEPHYDQF…RKRYPDIKRL (213 aa). ATP is bound at residue 207–214; that stretch reads AETGSGKT. A DEAD box motif is present at residues 353 to 356; sequence DEAD. In terms of domain architecture, Helicase C-terminal spans 460–632; sequence FLEPKTKKIL…EGMFRGQALI (173 aa).

It belongs to the DEAD box helicase family. MRH4 subfamily.

The protein localises to the mitochondrion. The enzyme catalyses ATP + H2O = ADP + phosphate + H(+). Its function is as follows. ATP-binding RNA helicase involved in mitochondrial RNA metabolism. Required for maintenance of mitochondrial DNA. In Aspergillus clavatus (strain ATCC 1007 / CBS 513.65 / DSM 816 / NCTC 3887 / NRRL 1 / QM 1276 / 107), this protein is ATP-dependent RNA helicase mrh4, mitochondrial (mrh4).